The following is a 408-amino-acid chain: MGALTIVAKYMIVAQIEVNGSVDKSDIIGALFSQTEGLLGKDMDLRELQMMGRIGRIEVDIFEKNGKTKAKIHIPSNLDRYETALVAALIESIERVGPYPAAVKVVEIRDLREEKRKKIIEKAKELVKLIEEEILPDTKEIIEKLKEDVAKAEIIEYGPERLPAGPDVDKSDSIIIVEGRADVVNLVKHGYRNVIALEGISRGVPQTIIELSKKKNVTVFIDGDKGGELVLRELLKVAHVDYIARAPPGKEVEQLTAKEIAKALRNKITLEEWLAQQKAAGEKAETPQQPPPQQPVPQQEVREEAQKPAFPFDITKKIDEMLGTLEAEIYDENWTLVKRLPVRELPDFLTTSGDSIYAIILDGITTQRIVDLAAKKGVKIIVTARTGPLTKVPENMQILTFDQLKKVE.

In terms of domain architecture, Toprim spans 172–248 (DSIIIVEGRA…HVDYIARAPP (77 aa)). 3 residues coordinate Mg(2+): glutamate 178, aspartate 222, and aspartate 224. A disordered region spans residues 279 to 304 (AAGEKAETPQQPPPQQPVPQQEVREE).

It belongs to the archaeal DnaG primase family. Forms a ternary complex with MCM helicase and DNA. Component of the archaeal exosome complex. Mg(2+) serves as cofactor.

It carries out the reaction ssDNA + n NTP = ssDNA/pppN(pN)n-1 hybrid + (n-1) diphosphate.. Functionally, RNA polymerase that catalyzes the synthesis of short RNA molecules used as primers for DNA polymerase during DNA replication. Also part of the exosome, which is a complex involved in RNA degradation. Acts as a poly(A)-binding protein that enhances the interaction between heteromeric, adenine-rich transcripts and the exosome. The polypeptide is DNA primase DnaG (Pyrobaculum aerophilum (strain ATCC 51768 / DSM 7523 / JCM 9630 / CIP 104966 / NBRC 100827 / IM2)).